A 340-amino-acid chain; its full sequence is Glyceraldehyde-3-phosphate dehydrogenase (340 aa).

NAD(+)-binding positions include 11 to 12 (TI) and glycine 109. D-glyceraldehyde 3-phosphate is bound at residue 138-140 (SCN). Cysteine 139 serves as the catalytic Nucleophile. NAD(+) is bound at residue arginine 167. Position 193-194 (193-194 (HA)) interacts with D-glyceraldehyde 3-phosphate. NAD(+) is bound at residue glutamine 300.

It belongs to the glyceraldehyde-3-phosphate dehydrogenase family. Homotetramer.

The protein resides in the cytoplasm. The enzyme catalyses D-glyceraldehyde 3-phosphate + phosphate + NADP(+) = (2R)-3-phospho-glyceroyl phosphate + NADPH + H(+). The catalysed reaction is D-glyceraldehyde 3-phosphate + phosphate + NAD(+) = (2R)-3-phospho-glyceroyl phosphate + NADH + H(+). Its pathway is carbohydrate degradation; glycolysis; pyruvate from D-glyceraldehyde 3-phosphate: step 1/5. The protein is Glyceraldehyde-3-phosphate dehydrogenase of Saccharolobus islandicus (strain L.S.2.15 / Lassen #1) (Sulfolobus islandicus).